The sequence spans 861 residues: DNA mismatch repair protein MutS (861 aa).

An ATP-binding site is contributed by 618-625; that stretch reads GPNMGGKS.

It belongs to the DNA mismatch repair MutS family.

In terms of biological role, this protein is involved in the repair of mismatches in DNA. It is possible that it carries out the mismatch recognition step. This protein has a weak ATPase activity. In Shewanella sp. (strain MR-4), this protein is DNA mismatch repair protein MutS.